The following is a 117-amino-acid chain: Large ribosomal subunit protein bL20 (117 aa).

Belongs to the bacterial ribosomal protein bL20 family.

Functionally, binds directly to 23S ribosomal RNA and is necessary for the in vitro assembly process of the 50S ribosomal subunit. It is not involved in the protein synthesizing functions of that subunit. This is Large ribosomal subunit protein bL20 from Lawsonia intracellularis (strain PHE/MN1-00).